A 93-amino-acid chain; its full sequence is Defensin-like protein 229 (93 aa).

Positions Met-1–Ser-19 are cleaved as a signal peptide. 4 disulfide bridges follow: Cys-38–Cys-93, Cys-48–Cys-72, Cys-56–Cys-84, and Cys-70–Cys-86.

Belongs to the DEFL family. In terms of tissue distribution, flower buds.

It is found in the secreted. The polypeptide is Defensin-like protein 229 (SCRL27) (Arabidopsis thaliana (Mouse-ear cress)).